A 257-amino-acid polypeptide reads, in one-letter code: UPF0246 protein Ent638_0568 (257 aa).

Belongs to the UPF0246 family.

The polypeptide is UPF0246 protein Ent638_0568 (Enterobacter sp. (strain 638)).